A 180-amino-acid polypeptide reads, in one-letter code: Flavin prenyltransferase UbiX (180 aa).

FMN-binding positions include 9–11 (GAS), Ser33, 84–87 (SITT), and Arg119. Positions 149 and 165 each coordinate dimethylallyl phosphate.

This sequence belongs to the UbiX/PAD1 family.

The enzyme catalyses dimethylallyl phosphate + FMNH2 = prenylated FMNH2 + phosphate. Its function is as follows. Flavin prenyltransferase that catalyzes the synthesis of the prenylated FMN cofactor (prenyl-FMN) for 4-hydroxy-3-polyprenylbenzoic acid decarboxylase UbiD. The prenyltransferase is metal-independent and links a dimethylallyl moiety from dimethylallyl monophosphate (DMAP) to the flavin N5 and C6 atoms of FMN. In Thermoplasma acidophilum (strain ATCC 25905 / DSM 1728 / JCM 9062 / NBRC 15155 / AMRC-C165), this protein is Flavin prenyltransferase UbiX.